Here is a 310-residue protein sequence, read N- to C-terminus: tRNA dimethylallyltransferase (310 aa).

24 to 31 (GPTASGKT) contacts ATP. Residue 26 to 31 (TASGKT) participates in substrate binding. The tract at residues 49-52 (DSRQ) is interaction with substrate tRNA.

Belongs to the IPP transferase family. As to quaternary structure, monomer. It depends on Mg(2+) as a cofactor.

It carries out the reaction adenosine(37) in tRNA + dimethylallyl diphosphate = N(6)-dimethylallyladenosine(37) in tRNA + diphosphate. Catalyzes the transfer of a dimethylallyl group onto the adenine at position 37 in tRNAs that read codons beginning with uridine, leading to the formation of N6-(dimethylallyl)adenosine (i(6)A). This is tRNA dimethylallyltransferase from Synechococcus sp. (strain WH7803).